We begin with the raw amino-acid sequence, 212 residues long: Ribosomal RNA small subunit methyltransferase G (212 aa).

S-adenosyl-L-methionine contacts are provided by residues G80, L85, 131–132 (AE), and R146.

Belongs to the methyltransferase superfamily. RNA methyltransferase RsmG family.

The protein resides in the cytoplasm. The enzyme catalyses guanosine(527) in 16S rRNA + S-adenosyl-L-methionine = N(7)-methylguanosine(527) in 16S rRNA + S-adenosyl-L-homocysteine. Specifically methylates the N7 position of guanine in position 527 of 16S rRNA. In Xanthomonas campestris pv. campestris (strain 8004), this protein is Ribosomal RNA small subunit methyltransferase G.